The sequence spans 507 residues: Glutamyl-tRNA(Gln) amidotransferase subunit A, mitochondrial (507 aa).

A disordered region spans residues 29-51; it reads THPPEPIPPPPPPAPSSSPSPKQ. Over residues 31-46 the composition is skewed to pro residues; it reads PPEPIPPPPPPAPSSS. Residues Lys57 and Ser135 each act as charge relay system in the active site. Ser159 acts as the Acyl-ester intermediate in catalysis.

This sequence belongs to the amidase family. GatA subfamily. As to quaternary structure, subunit of the heterotrimeric GatCAB amidotransferase (AdT) complex, composed of A, B and C subunits.

It localises to the mitochondrion. It carries out the reaction L-glutamyl-tRNA(Gln) + L-glutamine + ATP + H2O = L-glutaminyl-tRNA(Gln) + L-glutamate + ADP + phosphate + H(+). Its function is as follows. Allows the formation of correctly charged Gln-tRNA(Gln) through the transamidation of misacylated Glu-tRNA(Gln) in the mitochondria. The reaction takes place in the presence of glutamine and ATP through an activated gamma-phospho-Glu-tRNA(Gln). The chain is Glutamyl-tRNA(Gln) amidotransferase subunit A, mitochondrial from Podospora anserina (strain S / ATCC MYA-4624 / DSM 980 / FGSC 10383) (Pleurage anserina).